The primary structure comprises 103 residues: Defensin-like protein 289 (103 aa).

An N-terminal signal peptide occupies residues 1–29 (MATLKTTIFIIFILYISCTMFVNIFRVQA). Disulfide bonds link C33–C50, C39–C55, C43–C57, C72–C92, C78–C98, and C84–C100.

This sequence belongs to the DEFL family.

The protein resides in the secreted. The chain is Defensin-like protein 289 from Arabidopsis thaliana (Mouse-ear cress).